A 240-amino-acid polypeptide reads, in one-letter code: Octanoyltransferase (240 aa).

Positions 1–22 (MGTTGTNDGATTPPANTSTPAV) are disordered. Positions 10-21 (ATTPPANTSTPA) are enriched in low complexity. One can recognise a BPL/LPL catalytic domain in the interval 51 to 236 (EKIPDTILLL…NLVDALNGDL (186 aa)). Residues 89–96 (RGGRITWH), 166–168 (AIG), and 179–181 (GVA) contribute to the substrate site. Residue cysteine 197 is the Acyl-thioester intermediate of the active site.

The protein belongs to the LipB family.

The protein resides in the cytoplasm. The catalysed reaction is octanoyl-[ACP] + L-lysyl-[protein] = N(6)-octanoyl-L-lysyl-[protein] + holo-[ACP] + H(+). Its pathway is protein modification; protein lipoylation via endogenous pathway; protein N(6)-(lipoyl)lysine from octanoyl-[acyl-carrier-protein]: step 1/2. Its function is as follows. Catalyzes the transfer of endogenously produced octanoic acid from octanoyl-acyl-carrier-protein onto the lipoyl domains of lipoate-dependent enzymes. Lipoyl-ACP can also act as a substrate although octanoyl-ACP is likely to be the physiological substrate. This Corynebacterium jeikeium (strain K411) protein is Octanoyltransferase.